The sequence spans 500 residues: NAD(P)H-quinone oxidoreductase chain 4, chloroplastic (500 aa).

14 helical membrane-spanning segments follow: residues 4-24 (FPWL…IFFL), 31-51 (VIFW…TYAF), 84-104 (GLSI…TLAA), 111-131 (ARLF…LFSC), 134-154 (LLLF…LLSM), 167-187 (FILY…GIGL), 212-232 (IFYI…PLHT), 242-262 (HYST…YGLV), 272-292 (AHSL…IYAA), 308-328 (SSVS…DIGL), 330-350 (GALL…FLAG), 386-406 (LALP…GLIT), 411-431 (LLMA…LTPI), and 462-482 (LFLS…PDFV).

It belongs to the complex I subunit 4 family.

Its subcellular location is the plastid. The protein resides in the chloroplast thylakoid membrane. The catalysed reaction is a plastoquinone + NADH + (n+1) H(+)(in) = a plastoquinol + NAD(+) + n H(+)(out). It carries out the reaction a plastoquinone + NADPH + (n+1) H(+)(in) = a plastoquinol + NADP(+) + n H(+)(out). The polypeptide is NAD(P)H-quinone oxidoreductase chain 4, chloroplastic (Jasminum nudiflorum (Winter jasmine)).